Consider the following 713-residue polypeptide: Glutamine-dependent NAD(+) synthetase (713 aa).

The CN hydrolase domain occupies Val4–Leu275. Glu44 functions as the Proton acceptor; for glutaminase activity in the catalytic mechanism. The active-site For glutaminase activity is the Lys114. Cys175 (nucleophile; for glutaminase activity) is an active-site residue. Residues Tyr324–Asn703 are ligase. Pro354 to Ser361 is an ATP binding site. Residue Ser356 is part of the active site.

It in the C-terminal section; belongs to the NAD synthetase family.

The catalysed reaction is deamido-NAD(+) + L-glutamine + ATP + H2O = L-glutamate + AMP + diphosphate + NAD(+) + H(+). The protein operates within cofactor biosynthesis; NAD(+) biosynthesis; NAD(+) from deamido-NAD(+) (L-Gln route): step 1/1. This Dictyostelium discoideum (Social amoeba) protein is Glutamine-dependent NAD(+) synthetase (nadsyn1).